The sequence spans 151 residues: Protein A151R (151 aa).

H102, C109, C132, and C135 together coordinate Zn(2+). Residues 131–135 (WCTKC) carry the Thioredoxin WCTKC motif motif.

This sequence belongs to the asfivirus A151R family. Monomer. Homodimer. Interacts with protein B119L. Interacts with membrane protein E248R. It depends on Zn(2+) as a cofactor.

In terms of biological role, may participate in a redox cascade for the formation of disulfide bonds in viral proteins. In African swine fever virus (strain Badajoz 1971 Vero-adapted) (Ba71V), this protein is Protein A151R.